A 117-amino-acid polypeptide reads, in one-letter code: Galanin peptides (117 aa).

The first 19 residues, 1–19 (MQRCAGFLFLSLILCAALS), serve as a signal peptide directing secretion. Positions 20 to 30 (ETFGLVLSAKE) are excised as a propeptide. Thr-61 carries the threonine amide modification.

It belongs to the galanin family.

It is found in the secreted. Endocrine hormone of the central and peripheral nervous systems that binds and activates the G protein-coupled receptors GALR1, GALR2, and GALR3. This small neuropeptide may regulate diverse physiologic functions including contraction of smooth muscle of the gastrointestinal and genitourinary tract, growth hormone and insulin release and adrenal secretion. The chain is Galanin peptides (GAL) from Coturnix japonica (Japanese quail).